A 440-amino-acid polypeptide reads, in one-letter code: L-gulonolactone oxidase (440 aa).

The FAD-binding PCMH-type domain maps to 17–187 (YSCEPELYFE…LNVTIQCVPA (171 aa)). Histidine 54 bears the Pros-8alpha-FAD histidine mark. The helical transmembrane segment at 245–267 (WFWNYAIGYYLLEFLLWISVFVP) threads the bilayer.

This sequence belongs to the oxygen-dependent FAD-linked oxidoreductase family. It depends on FAD as a cofactor.

It localises to the microsome membrane. The protein localises to the endoplasmic reticulum membrane. It catalyses the reaction L-gulono-1,4-lactone + O2 = L-ascorbate + H2O2 + H(+). It participates in cofactor biosynthesis; L-ascorbate biosynthesis via UDP-alpha-D-glucuronate pathway; L-ascorbate from UDP-alpha-D-glucuronate: step 4/4. Functionally, oxidizes L-gulono-1,4-lactone to hydrogen peroxide and L-xylo-hexulonolactone which spontaneously isomerizes to L-ascorbate. This chain is L-gulonolactone oxidase (GULO), found in Scyliorhinus torazame (Cloudy catshark).